A 141-amino-acid chain; its full sequence is Hemoglobin subunit alpha-D (141 aa).

Residues 1–141 (MLNHDEKQLI…VSAVLAEKYR (141 aa)) enclose the Globin domain. Histidine 58 and histidine 87 together coordinate heme b.

Belongs to the globin family. Heterotetramer of two alpha-D chains and two beta chains. Red blood cells.

Its function is as follows. Involved in oxygen transport from the lung to the various peripheral tissues. This Chrysemys picta bellii (Western painted turtle) protein is Hemoglobin subunit alpha-D (HBAD).